Reading from the N-terminus, the 643-residue chain is Macrolide export ATP-binding/permease protein MacB (643 aa).

Positions 6 to 244 constitute an ABC transporter domain; the sequence is IELKGVSRVF…QVRSPFGVRH (239 aa). 42-49 contributes to the ATP binding site; sequence GASGSGKS. 4 helical membrane-spanning segments follow: residues 270 to 290, 518 to 538, 569 to 589, and 606 to 626; these read VLTL…LAIG, LTIL…IGVM, FLIE…VIGL, and LMPI…FGYL.

It belongs to the ABC transporter superfamily. Macrolide exporter (TC 3.A.1.122) family. In terms of assembly, homodimer.

The protein resides in the cell inner membrane. In terms of biological role, non-canonical ABC transporter that contains transmembrane domains (TMD), which form a pore in the inner membrane, and an ATP-binding domain (NBD), which is responsible for energy generation. Confers resistance against macrolides. The polypeptide is Macrolide export ATP-binding/permease protein MacB (Wolinella succinogenes (strain ATCC 29543 / DSM 1740 / CCUG 13145 / JCM 31913 / LMG 7466 / NCTC 11488 / FDC 602W) (Vibrio succinogenes)).